The chain runs to 442 residues: Envelope glycoprotein D (442 aa).

Positions 1–19 (MPAVLLVLYVNPPPSVCIL) are cleaved as a signal peptide. The Virion surface portion of the chain corresponds to 20 to 405 (TQKLSLGLYN…NSTFVGISVG (386 aa)). N-linked (GlcNAc...) asparagine; by host glycans are attached at residues Asn103 and Asn111. 3 disulfides stabilise this stretch: Cys138/Cys259, Cys176/Cys273, and Cys188/Cys197. The interval 331–364 (PDNHPGFDSVESEITQNKTDPKPGQADPKPNQPF) is disordered. N-linked (GlcNAc...) asparagine; by host glycans are attached at residues Asn347 and Asn396. A helical transmembrane segment spans residues 406–422 (LGIAGLVLVGVILYVCL). Topologically, residues 423–442 (RRKKELKVCTERLDSPTLDL) are intravirion.

It belongs to the herpesviridae glycoprotein D family.

The protein localises to the virion membrane. Envelope glycoprotein that binds to host cell entry receptors, promoting the virus entry into host cells. May trigger fusion with host membrane, by recruiting the fusion machinery composed of gB and gH/gL. This is Envelope glycoprotein D (gD) from Equine herpesvirus 1 (strain Kentucky A) (EHV-1).